The primary structure comprises 174 residues: Chorismate pyruvate-lyase (174 aa).

Residues Met36, Arg78, Leu116, and Glu157 each contribute to the substrate site.

The protein belongs to the UbiC family. In terms of assembly, monomer.

It is found in the cytoplasm. It catalyses the reaction chorismate = 4-hydroxybenzoate + pyruvate. Its pathway is cofactor biosynthesis; ubiquinone biosynthesis. Functionally, removes the pyruvyl group from chorismate, with concomitant aromatization of the ring, to provide 4-hydroxybenzoate (4HB) for the ubiquinone pathway. In Erwinia tasmaniensis (strain DSM 17950 / CFBP 7177 / CIP 109463 / NCPPB 4357 / Et1/99), this protein is Chorismate pyruvate-lyase.